The sequence spans 728 residues: Fibulin-1 (728 aa).

Residues M1 to A17 form the signal peptide. Intrachain disulfides connect C23–C49, C24–C56, C37–C57, C66–C94, C79–C95, C97–C121, C98–C128, C111–C129, C159–C168, C164–C178, C180–C279, C285–C298, C292–C307, C347–C359, C353–C368, C375–C388, C394–C404, C399–C413, C415–C428, C434–C448, C442–C457, C459–C472, C478–C489, C485–C498, C500–C513, C519–C534, C530–C543, C545–C558, C564–C576, and C569–C585. 3 Anaphylatoxin-like domains span residues C23–N64, A65–D96, and C97–C129. The 40-residue stretch at L155–V194 folds into the EGF-like 1 domain. Positions D195 to V280 constitute an EGF-like 2; calcium-binding domain. Residues D281–I344 form the EGF-like 3; calcium-binding domain. The 47-residue stretch at D343 to E389 folds into the EGF-like 4; calcium-binding domain. The region spanning D390–E429 is the EGF-like 5; calcium-binding domain. One can recognise an EGF-like 6; calcium-binding domain in the interval D430–E473. The 41-residue stretch at D474 to E514 folds into the EGF-like 7; calcium-binding domain. The region spanning D515 to V559 is the EGF-like 8; calcium-binding domain. The 51-residue stretch at D560 to C610 folds into the EGF-like 9; calcium-binding domain. N624 carries N-linked (GlcNAc...) asparagine glycosylation.

This sequence belongs to the fibulin family. In terms of assembly, homomultimerizes and interacts with various extracellular matrix components. Expressed in head muscle cells, anterior and posterior intestinal cells. Isoform a: Expressed in male and hermaphrodite gonad, anterior and posterior intestine and pharyngeal basement membranes, body-wall muscle, GLR cells, uterine attachment and mechanosensory neurons. Isoform c: Expressed on ALM/PLM mechanosensory neuron attachments, in flexible tracks connecting the pharyngeal, body-wall-muscle basement membranes and in uterine attachments.

The protein localises to the secreted. Its subcellular location is the extracellular space. The protein resides in the extracellular matrix. It localises to the basement membrane. In terms of biological role, incorporated into fibronectin-containing matrix fibers. Plays a role in cell adhesion and migration along protein fibers within the extracellular matrix (ECM). Important for certain developmental processes and contributes to the supramolecular organization of ECM architecture, in particular to those of basement membranes. Involved in regulating the shape and adhesion of cells in the developing pharynx, intestine, body-wall muscle and gonadal tissue. During gonadogenesis, regulates the width of gonads and the migration of distal tip cells (DTC). Together with type IV collagen let-2 and downstream of metalloprotease mig-17, recruits nidogen nid-1 to the gonad basement membrane thereby inducing basement membrane remodeling required for the directional migration of DTCs. Acts antagonistically with metalloprotease gon-1 to maintain optimal levels of type IV collagen emb-9 in the gonad basement membrane during gonadogenesis. Required for larval development. Functionally, involved in the assembly of the flexible hemicentin-containing tracks found joining the pharynx and body-wall-muscle basement membranes. The protein is Fibulin-1 (fbl-1) of Caenorhabditis elegans.